Here is a 24-residue protein sequence, read N- to C-terminus: Pandinin-2 (24 aa).

Homooligomer. In terms of tissue distribution, expressed by the venom gland.

Its subcellular location is the secreted. The protein resides in the target cell membrane. Functionally, disrupts cell membranes through formation of pores. Has strong antimicrobial activity against Gram-positive bacteria B.subtilis, S.epidermidis, E.faecalis and S.aureus. Is less active against Gram-negative bacteria P.aeruginosa and E.coli. Also increases efficacy of antibiotics (ampicillin, chloramphenicol, streptomycin, kanamycin, novobiocin) when tested against E.coli, probably by facilitating their incorporation into the bacteria. Possesses antifungal activity against C.albicans and hemolytic activity against human, sheep and pig erythrocytes. The chain is Pandinin-2 from Pandinus imperator (Emperor scorpion).